A 469-amino-acid chain; its full sequence is RNA-editing ligase 1, mitochondrial (469 aa).

The N-terminal 44 residues, 1-44 (MQLQRLGAPLLKRLVGGCIRQSTAPIMPCVVVSGSGVFLTPVRT), are a transit peptide targeting the mitochondrion. Residues 59–61 (IEI), 86–92 (EKVHGTN), Arg111, Glu159, Phe209, and 307–309 (KLR) each bind ATP. The active-site N6-AMP-lysine intermediate is the Lys87. The interval 450–469 (AAAQSEAIPPLSPAAPTKGE) is disordered.

It belongs to the RNA ligase 2 family. Component of the RNA editing complex (editosome), a 1600 kDa complex composed of at least 20 proteins. Interacts with terminal uridylyltransferase MEAT1.

The protein resides in the mitochondrion. It catalyses the reaction ATP + (ribonucleotide)n-3'-hydroxyl + 5'-phospho-(ribonucleotide)m = (ribonucleotide)n+m + AMP + diphosphate.. Its function is as follows. Essential for RNA editing. RNA editing in kinetoplastid mitochondria inserts and deletes uridylates at multiple sites in pre-mRNAs as directed by guide RNAs. The sequence is that of RNA-editing ligase 1, mitochondrial (REL1) from Trypanosoma brucei brucei.